Reading from the N-terminus, the 568-residue chain is 2-succinyl-5-enolpyruvyl-6-hydroxy-3-cyclohexene-1-carboxylate synthase (568 aa).

Belongs to the TPP enzyme family. MenD subfamily. Homodimer. It depends on Mg(2+) as a cofactor. Requires Mn(2+) as cofactor. Thiamine diphosphate serves as cofactor.

It catalyses the reaction isochorismate + 2-oxoglutarate + H(+) = 5-enolpyruvoyl-6-hydroxy-2-succinyl-cyclohex-3-ene-1-carboxylate + CO2. It participates in quinol/quinone metabolism; 1,4-dihydroxy-2-naphthoate biosynthesis; 1,4-dihydroxy-2-naphthoate from chorismate: step 2/7. The protein operates within quinol/quinone metabolism; menaquinone biosynthesis. Catalyzes the thiamine diphosphate-dependent decarboxylation of 2-oxoglutarate and the subsequent addition of the resulting succinic semialdehyde-thiamine pyrophosphate anion to isochorismate to yield 2-succinyl-5-enolpyruvyl-6-hydroxy-3-cyclohexene-1-carboxylate (SEPHCHC). The polypeptide is 2-succinyl-5-enolpyruvyl-6-hydroxy-3-cyclohexene-1-carboxylate synthase (Haemophilus influenzae (strain PittGG)).